A 483-amino-acid chain; its full sequence is PRAME family member 12 (483 aa).

An LRR 1; degenerate repeat occupies 97–122 (RWKLQVLDLRNVDENFWGIWSGASAL). One copy of the LRR 2; degenerate repeat lies at 177–201 (HVCCKELQIFGIAIHRIIEVLNTVE). One copy of the LRR 3; degenerate repeat lies at 202-228 (LDCIQEVEVCCPWELSILIRFAPYLGQ). An LRR 4; degenerate repeat occupies 229 to 264 (MRNLRKLVLFNIHVSACIPLDRKEQFVIQFTSQFLK). LRR repeat units lie at residues 265–290 (LDYF…LRCL), 291–322 (QAPL…RQLK), 323–341 (ELDL…PLSV), 347–374 (EATL…ALSR), and 375–399 (CSQL…LLRH).

The protein belongs to the PRAME family.

This is PRAME family member 12 from Homo sapiens (Human).